The following is a 417-amino-acid chain: MMPNLSCFSVAISEPTCHDPDSGGHFGGPDGYGGRYVPEALMAVIEEVTAAYEKERVNQDFLDLLDKLQANYAGRPSPLYEATRLSEYAGSVRIFLKREDLNHTGSHKINNVLGQTLLAQRMGKTRVIAETGAGQHGVATATACALFGLDCVIYMGALDTARQALNVARMRLLGAEVVSVETGSRTLKDAINDAFRDWVTNADNTYYCFGTASGPHPFPTMVRDLQRVIGLETRRQIQYQAGRLPDAVTACIGGGSNAIGIFHAFLDDPGVRLVGFEAAGDGVETGRHAATLTGGLPGAFQGTFSYLLQDEDGQTIESHSIAAGLDYPGVGPEHAWLRETGRAEYQPITDSEAIEAFRLLCRTEGILPALESAHAVAGALKLASEIGKGAVIVVNLSGRGDKDIEAAAKWFGLLGTR.

Residue K108 is modified to N6-(pyridoxal phosphate)lysine.

This sequence belongs to the TrpB family. Tetramer of two alpha and two beta chains. It depends on pyridoxal 5'-phosphate as a cofactor.

The catalysed reaction is (1S,2R)-1-C-(indol-3-yl)glycerol 3-phosphate + L-serine = D-glyceraldehyde 3-phosphate + L-tryptophan + H2O. Its pathway is amino-acid biosynthesis; L-tryptophan biosynthesis; L-tryptophan from chorismate: step 5/5. Functionally, the beta subunit is responsible for the synthesis of L-tryptophan from indole and L-serine. The sequence is that of Tryptophan synthase beta chain (trpB) from Mycobacterium leprae (strain TN).